Reading from the N-terminus, the 356-residue chain is Tyrosine recombinase XerS (356 aa).

Residues 16-121 (VMPPYVLEYY…ALSSLYKYLT (106 aa)) form the Core-binding (CB) domain. A Tyr recombinase domain is found at 169–354 (GFLDYIDSEY…INEEQKNALD (186 aa)). Catalysis depends on residues arginine 210, lysine 234, histidine 306, arginine 309, and histidine 332. Tyrosine 341 functions as the O-(3'-phospho-DNA)-tyrosine intermediate in the catalytic mechanism.

This sequence belongs to the 'phage' integrase family. XerS subfamily.

The protein localises to the cytoplasm. Its activity is regulated as follows. FtsK is required for recombination. In terms of biological role, site-specific tyrosine recombinase, which acts by catalyzing the cutting and rejoining of the recombining DNA molecules. Essential to convert dimers of the bacterial chromosome into monomers to permit their segregation at cell division. This is Tyrosine recombinase XerS from Lactococcus lactis subsp. cremoris (strain SK11).